Reading from the N-terminus, the 446-residue chain is NADH-quinone oxidoreductase subunit D (446 aa).

The protein belongs to the complex I 49 kDa subunit family. In terms of assembly, NDH-1 is composed of 14 different subunits. Subunits NuoB, C, D, E, F, and G constitute the peripheral sector of the complex.

Its subcellular location is the cell membrane. It catalyses the reaction a quinone + NADH + 5 H(+)(in) = a quinol + NAD(+) + 4 H(+)(out). NDH-1 shuttles electrons from NADH, via FMN and iron-sulfur (Fe-S) centers, to quinones in the respiratory chain. The immediate electron acceptor for the enzyme in this species is believed to be a menaquinone. Couples the redox reaction to proton translocation (for every two electrons transferred, four hydrogen ions are translocated across the cytoplasmic membrane), and thus conserves the redox energy in a proton gradient. The chain is NADH-quinone oxidoreductase subunit D from Mycobacterium sp. (strain JLS).